We begin with the raw amino-acid sequence, 55 residues long: Large ribosomal subunit protein bL33 (55 aa).

This sequence belongs to the bacterial ribosomal protein bL33 family.

This is Large ribosomal subunit protein bL33 from Ruegeria sp. (strain TM1040) (Silicibacter sp.).